The chain runs to 227 residues: Adapter protein MecA 1 (227 aa).

Belongs to the MecA family. Homodimer.

In terms of biological role, enables the recognition and targeting of unfolded and aggregated proteins to the ClpC protease or to other proteins involved in proteolysis. Acts negatively in the development of competence by binding ComK and recruiting it to the ClpCP protease. When overexpressed, inhibits sporulation. Also involved in Spx degradation by ClpC. The sequence is that of Adapter protein MecA 1 (mecA1) from Bacillus cereus (strain ATCC 14579 / DSM 31 / CCUG 7414 / JCM 2152 / NBRC 15305 / NCIMB 9373 / NCTC 2599 / NRRL B-3711).